The sequence spans 180 residues: MSRIGLQQLNNSARNSPFGSEKATGTKQIPEPLKLTAQLKKYQPITPSPLASATTITPVLSPFDVFCDDDQEAKNVETQMFEYGTVSTQTIINVPHVQPKITEADLTSEKPTVNYLRVMADRLQMDLDDEMDRNQRLVAELGDLDEKMRKIDDDTEILLEVLADIDEEQQTDEEIGTAQL.

Residues 1–27 (MSRIGLQQLNNSARNSPFGSEKATGTK) are compositionally biased toward polar residues. The tract at residues 1 to 29 (MSRIGLQQLNNSARNSPFGSEKATGTKQI) is disordered.

This sequence belongs to the geminin family. In terms of assembly, homodimer. Interacts with cdt-1; the interaction most likely inhibits the ability of cdt-1 to load the mini-chromosome maintenance (MCM) complex onto DNA and therefore reduces DNA replication licensing activity. Interacts with nob-1 and ceh-32.

It is found in the cytoplasm. It localises to the nucleus. Its function is as follows. Inhibits DNA replication by binding to the DNA replication licensing factor cdt-1. Its interaction with cdt-1 prevents the cdt-1 loading of the mini-chromosome maintenance (MCM) complex onto DNA and therefore DNA replication licencing. The polypeptide is Geminin homolog (Caenorhabditis elegans).